A 1055-amino-acid polypeptide reads, in one-letter code: Focal adhesion kinase 1 (1055 aa).

The segment at Met1–Ser29 is disordered. Ala2 bears the N-acetylalanine mark. Tyr5 carries the phosphotyrosine modification. Residues Leu10–Glu27 are compositionally biased toward polar residues. Thr13 carries the post-translational modification Phosphothreonine. A phosphoserine mark is found at Ser29 and Ser54. Positions Arg35–Thr355 constitute an FERM domain. Residue Lys152 forms a Glycyl lysine isopeptide (Lys-Gly) (interchain with G-Cter in SUMO) linkage. Tyr397 is modified (phosphotyrosine; by autocatalysis). Tyr407 carries the post-translational modification Phosphotyrosine. A Protein kinase domain is found at Ile422–Leu680. Residues Ile428–Gly434, Lys454, and Glu500–Cys502 each bind ATP. Asp546 (proton acceptor) is an active-site residue. A phosphotyrosine mark is found at Tyr570 and Tyr576. Tyr577 carries the phosphotyrosine; by RET and SRC modification. Position 580 is a phosphoserine (Ser580). Over residues Val685–Arg697 the composition is skewed to basic and acidic residues. Disordered regions lie at residues Val685–Gln734 and Val837–Ser923. The segment at Gly707–His1055 is interaction with TGFB1I1. Phosphoserine is present on Ser722. At Ser732 the chain carries Phosphoserine; by CDK5. Residues Val837–Gly849 show a composition bias toward basic and acidic residues. A Phosphoserine modification is found at Ser843. Tyr861 carries the phosphotyrosine modification. A compositionally biased stretch (pro residues) spans Pro869 to Gly880. Residues Ser886–Glu896 are compositionally biased toward polar residues. A Phosphoserine modification is found at Ser913. Residues Pro915–His1055 form an interaction with ARHGEF28 region. Thr917 carries the post-translational modification Phosphothreonine. Tyr928 bears the Phosphotyrosine mark.

It belongs to the protein kinase superfamily. Tyr protein kinase family. FAK subfamily. As to quaternary structure, interacts with GIT1. Component of a complex that contains at least FER, CTTN and PTK2/FAK1. Interacts with BMX. Interacts with STEAP4. Interacts with ZFYVE21. Interacts with ESR1. Interacts with PIK3R1 or PIK3R2. Interacts with FGR, FLT4 and RET. Interacts with EPHA2 in resting cells; activation of EPHA2 recruits PTPN11, leading to dephosphorylation of PTK2/FAK1 and dissociation of the complex. Interacts with EPHA1 (kinase activity-dependent). Interacts with P53/TP53. Interacts (via first Pro-rich region) with CAS family members (via SH3 domain), including BCAR1, BCAR3, and CASS4. Interacts with NEDD9 (via SH3 domain). Interacts with TGFB1I1. Interacts with SRC, GRB2 and GRB7. Interacts with ARHGEF28. Interacts with SHB. Part of a complex composed of THSD1, PTK2/FAK1, TLN1 and VCL. Interacts with PXN and TLN1. Interacts with SORBS1. Interacts with STAT1. Interacts with WASL. Interacts with ARHGAP26 and SHC1. Interacts with RB1CC1; this inhibits PTK2/FAK1 activity and activation of downstream signaling pathways. Interacts with ARHGEF7. Interacts with MDM2. Interacts with PIAS1. Interacts with DCC. Interacts with LPXN (via LD motif 3). Interacts with MISP. Interacts with EMP2; regulates PTK2 activation and localization. Interacts with DSCAM. Interacts with AMBRA1. Interacts (when tyrosine-phosphorylated) with tensin TNS1; the interaction is increased by phosphorylation of TNS1. Post-translationally, phosphorylated on tyrosine residues upon activation, e.g. upon integrin signaling. Tyr-397 is the major autophosphorylation site, but other kinases can also phosphorylate this residue. Phosphorylation at Tyr-397 promotes interaction with SRC and SRC family members, leading to phosphorylation at Tyr-576, Tyr-577 and at additional tyrosine residues. FGR promotes phosphorylation at Tyr-397 and Tyr-576. FER promotes phosphorylation at Tyr-577, Tyr-861 and Tyr-928, even when cells are not adherent. Tyr-397, Tyr-576 and Ser-722 are phosphorylated only when cells are adherent. Phosphorylation at Tyr-397 is important for interaction with BMX, PIK3R1 and SHC1. Phosphorylation at Tyr-928 is important for interaction with GRB2. Dephosphorylated by PTPN11; PTPN11 is recruited to PTK2 via EPHA2 (tyrosine phosphorylated). Microtubule-induced dephosphorylation at Tyr-397 is crucial for the induction of focal adhesion disassembly; this dephosphorylation could be catalyzed by PTPN11 and regulated by ZFYVE21. Phosphorylation on tyrosine residues is enhanced by NTN1. In terms of processing, sumoylated; this enhances autophosphorylation.

It localises to the cell junction. The protein localises to the focal adhesion. The protein resides in the cell membrane. It is found in the cytoplasm. Its subcellular location is the perinuclear region. It localises to the cell cortex. The protein localises to the cytoskeleton. The protein resides in the microtubule organizing center. It is found in the centrosome. Its subcellular location is the nucleus. It localises to the cilium basal body. It carries out the reaction L-tyrosyl-[protein] + ATP = O-phospho-L-tyrosyl-[protein] + ADP + H(+). Subject to autoinhibition, mediated by interactions between the FERM domain and the kinase domain. Activated by autophosphorylation at Tyr-397. This promotes interaction with SRC and phosphorylation at Tyr-576 and Tyr-577 in the kinase activation loop by SRC. Phosphorylation at Tyr-397, Tyr-576 and Tyr-577 is required for maximal kinase activity. In terms of biological role, non-receptor protein-tyrosine kinase that plays an essential role in regulating cell migration, adhesion, spreading, reorganization of the actin cytoskeleton, formation and disassembly of focal adhesions and cell protrusions, cell cycle progression, cell proliferation and apoptosis. Required for early embryonic development and placenta development. Required for embryonic angiogenesis, normal cardiomyocyte migration and proliferation, and normal heart development. Regulates axon growth and neuronal cell migration, axon branching and synapse formation; required for normal development of the nervous system. Plays a role in osteogenesis and differentiation of osteoblasts. Functions in integrin signal transduction, but also in signaling downstream of numerous growth factor receptors, G-protein coupled receptors (GPCR), EPHA2, netrin receptors and LDL receptors. Forms multisubunit signaling complexes with SRC and SRC family members upon activation; this leads to the phosphorylation of additional tyrosine residues, creating binding sites for scaffold proteins, effectors and substrates. Regulates numerous signaling pathways. Promotes activation of phosphatidylinositol 3-kinase and the AKT1 signaling cascade. Promotes activation of MAPK1/ERK2, MAPK3/ERK1 and the MAP kinase signaling cascade. Promotes localized and transient activation of guanine nucleotide exchange factors (GEFs) and GTPase-activating proteins (GAPs), and thereby modulates the activity of Rho family GTPases. Signaling via CAS family members mediates activation of RAC1. Phosphorylates NEDD9 following integrin stimulation. Recruits the ubiquitin ligase MDM2 to P53/TP53 in the nucleus, and thereby regulates P53/TP53 activity, P53/TP53 ubiquitination and proteasomal degradation. Phosphorylates SRC; this increases SRC kinase activity. Phosphorylates ACTN1, ARHGEF7, GRB7, RET and WASL. Promotes phosphorylation of PXN and STAT1; most likely PXN and STAT1 are phosphorylated by a SRC family kinase that is recruited to autophosphorylated PTK2/FAK1, rather than by PTK2/FAK1 itself. Promotes phosphorylation of BCAR1; GIT2 and SHC1; this requires both SRC and PTK2/FAK1. Promotes phosphorylation of BMX and PIK3R1. Does not contain a kinase domain and inhibits PTK2/FAK1 phosphorylation and signaling. Its enhanced expression can attenuate the nuclear accumulation of LPXN and limit its ability to enhance serum response factor (SRF)-dependent gene transcription. The polypeptide is Focal adhesion kinase 1 (Rattus norvegicus (Rat)).